Consider the following 80-residue polypeptide: Serine rich endogenous peptide 18 (80 aa).

Positions 1–25 (MYNVVVCLLTLSFLLLTGLSNTAEA) are cleaved as a signal peptide. An SCOOP motif motif is present at residues 45–59 (KAEVGGSCSPHAHGR). The tract at residues 50-80 (GSCSPHAHGRGPPNRPGSSNIPGSPKRCTKP) is disordered. The SxS motif essential for MIK2 binding motif lies at 51–53 (SCS).

This sequence belongs to the serine rich endogenous peptide (SCOOP) phytocytokine family. As to quaternary structure, interacts with MIK2 (via extracellular leucine-rich repeat domain); this interaction triggers the formation of complex between MIK2 and the BAK1/SERK3 and SERK4 coreceptors, and subsequent BAK1 activation by phosphorylation.

Its subcellular location is the cell membrane. It localises to the secreted. The protein resides in the extracellular space. The protein localises to the apoplast. Brassicaceae-specific phytocytokine (plant endogenous peptide released into the apoplast) perceived by MIK2 in a BAK1/SERK3 and SERK4 coreceptors-dependent manner, that modulates various physiological and antimicrobial processes including growth prevention and reactive oxygen species (ROS) response regulation. In Arabidopsis thaliana (Mouse-ear cress), this protein is Serine rich endogenous peptide 18.